A 378-amino-acid chain; its full sequence is Heat-inducible transcription repressor HrcA (378 aa).

It belongs to the HrcA family.

In terms of biological role, negative regulator of class I heat shock genes (grpE-dnaK-dnaJ and groELS operons). Prevents heat-shock induction of these operons. This Synechocystis sp. (strain ATCC 27184 / PCC 6803 / Kazusa) protein is Heat-inducible transcription repressor HrcA.